Here is a 163-residue protein sequence, read N- to C-terminus: Lipoprotein signal peptidase (163 aa).

The next 4 helical transmembrane spans lie at 9-29 (YLAI…SALS), 39-59 (VLPF…SFLA), 67-87 (WFFT…LYKS), and 92-112 (LLCI…LDRV). Catalysis depends on residues D119 and D137. The helical transmembrane segment at 130-150 (WPAFNIADSAICVGAALIIWG) threads the bilayer.

It belongs to the peptidase A8 family.

It is found in the cell inner membrane. The enzyme catalyses Release of signal peptides from bacterial membrane prolipoproteins. Hydrolyzes -Xaa-Yaa-Zaa-|-(S,diacylglyceryl)Cys-, in which Xaa is hydrophobic (preferably Leu), and Yaa (Ala or Ser) and Zaa (Gly or Ala) have small, neutral side chains.. Its pathway is protein modification; lipoprotein biosynthesis (signal peptide cleavage). In terms of biological role, this protein specifically catalyzes the removal of signal peptides from prolipoproteins. This Polynucleobacter necessarius subsp. necessarius (strain STIR1) protein is Lipoprotein signal peptidase.